A 267-amino-acid polypeptide reads, in one-letter code: Eukaryotic translation initiation factor 3 subunit J (267 aa).

Disordered regions lie at residues 1 to 128 (MAPS…DIDL) and 220 to 241 (KMREERAADKGNKKTKAAKTKV). Acidic residues predominate over residues 28 to 46 (DEEEEDVLDSWDAAEDSEV). A coiled-coil region spans residues 44–96 (SEVEREKAAKAAAAAAKAEAEAAAKKKSKAQRIEEHKQERKKQAEANESDEDS). A compositionally biased stretch (basic and acidic residues) spans 74-88 (QRIEEHKQERKKQAE). Residues 90-100 (NESDEDSDEDE) are compositionally biased toward acidic residues. Basic and acidic residues-rich tracts occupy residues 108–121 (RRTEKEGDLKHAQD) and 220–231 (KMREERAADKGN).

It belongs to the eIF-3 subunit J family. As to quaternary structure, component of the eukaryotic translation initiation factor 3 (eIF-3) complex.

It is found in the cytoplasm. In terms of biological role, component of the eukaryotic translation initiation factor 3 (eIF-3) complex, which is involved in protein synthesis of a specialized repertoire of mRNAs and, together with other initiation factors, stimulates binding of mRNA and methionyl-tRNAi to the 40S ribosome. The eIF-3 complex specifically targets and initiates translation of a subset of mRNAs involved in cell proliferation. The polypeptide is Eukaryotic translation initiation factor 3 subunit J (hcr1) (Neosartorya fischeri (strain ATCC 1020 / DSM 3700 / CBS 544.65 / FGSC A1164 / JCM 1740 / NRRL 181 / WB 181) (Aspergillus fischerianus)).